The primary structure comprises 460 residues: Muscarinic acetylcholine receptor M1 (460 aa).

Residues 1-22 (MNTSAPPAVSPNITVLAPGKGP) lie on the Extracellular side of the membrane. N2 and N12 each carry an N-linked (GlcNAc...) asparagine glycan. The chain crosses the membrane as a helical span at residues 23-48 (WQVAFIGITTGLLSLATVTGNLLVLI). The Cytoplasmic segment spans residues 49-62 (SFKVNTELKTVNNY). Residues 63 to 84 (FLLSLACADLIIGTFSMNLYTT) traverse the membrane as a helical segment. The Extracellular segment spans residues 85 to 95 (YLLMGHWALGT). A helical membrane pass occupies residues 96-121 (LACDLWLALDYVASNASVMNLLLISF). A disulfide bond links C98 and C178. Over 122–142 (DRYFSVTRPLSYRAKRTPRRA) the chain is Cytoplasmic. Residues 143-164 (ALMIGLAWLVSFVLWAPAILFW) traverse the membrane as a helical segment. The Extracellular portion of the chain corresponds to 165–185 (QYLVGERTVLAGQCYIQFLSQ). Residues 186 to 209 (PIITFGTAMAAFYLPVTVMCTLYW) form a helical membrane-spanning segment. Residues 210-366 (RIYRETENRA…LVKEKKAART (157 aa)) are Cytoplasmic-facing. Disordered regions lie at residues 225–256 (LQGSETPGKGGGSSSSSERSQPGAEGSPETPP), 274–296 (WKEEEEEDEGSMESLTSSEGEEP), and 310–351 (EAQA…QLAK). Position 230 is a phosphothreonine (T230). Over residues 238–247 (SSSSERSQPG) the composition is skewed to low complexity. Residues 328-343 (RPTRKGRERAGKGQKP) show a composition bias toward basic residues. A helical membrane pass occupies residues 367–390 (LSAILLAFIVTWTPYNIMVLVSTF). Over 391 to 397 (CKDCVPE) the chain is Extracellular. A helical membrane pass occupies residues 398–420 (TLWELGYWLCYVNSTINPMCYAL). The Cytoplasmic segment spans residues 421 to 460 (CNKAFRDTFRLLLLCRWDKRRWRKIPKRPGSVHRTPSRQC). T428 carries the post-translational modification Phosphothreonine. A Phosphoserine modification is found at S451. T455 carries the post-translational modification Phosphothreonine. S457 carries the phosphoserine modification.

Belongs to the G-protein coupled receptor 1 family. Muscarinic acetylcholine receptor subfamily. CHRM1 sub-subfamily. Interacts with GPRASP2. Interacts with TMEM147.

The protein localises to the cell membrane. The protein resides in the postsynaptic cell membrane. Its function is as follows. The muscarinic acetylcholine receptor mediates various cellular responses, including inhibition of adenylate cyclase, breakdown of phosphoinositides and modulation of potassium channels through the action of G proteins. Primary transducing effect is Pi turnover. This is Muscarinic acetylcholine receptor M1 (CHRM1) from Sus scrofa (Pig).